Here is a 688-residue protein sequence, read N- to C-terminus: Complement C1s subcomponent (688 aa).

The N-terminal stretch at 1–15 (MWCIVLFSLLAWVYA) is a signal peptide. The CUB 1 domain occupies 16–130 (EPTMYGEILS…TGFAAYYVAT (115 aa)). 6 residues coordinate Ca(2+): Glu60, Asp68, Asp113, Asp131, Ile132, and Glu134. Cys65 and Cys83 are joined by a disulfide. Residues 131-172 (DINECTDFVDVPCSHFCNNFIGGYFCSCPPEYFLHDDMKNCG) form the EGF-like; calcium-binding domain. 3 cysteine pairs are disulfide-bonded: Cys135–Cys147, Cys143–Cys156, and Cys158–Cys171. Ca(2+)-binding residues include Asn149, Phe150, and Gly153. A (3R)-3-hydroxyasparagine modification is found at Asn149. Asn174 carries N-linked (GlcNAc...) asparagine glycosylation. Cys175 and Cys202 are oxidised to a cystine. One can recognise a CUB 2 domain in the interval 175–290 (CSGDVFTALI…KGWKLRYHGD (116 aa)). The Ca(2+) site is built by Glu226, Asp236, Asp275, Gly278, and Gln279. Cys234 and Cys251 form a disulfide bridge. Sushi domains are found at residues 292–356 (MPCP…KCQP) and 357–423 (VDCG…KCVP). Cystine bridges form between Cys294–Cys341, Cys321–Cys354, Cys359–Cys403, Cys386–Cys421, Cys425–Cys549, Cys595–Cys618, and Cys628–Cys659. N-linked (GlcNAc...) asparagine glycosylation is present at Asn406. The 243-residue stretch at 438-680 (IIGGSDADIK…YVDWIMKTMQ (243 aa)) folds into the Peptidase S1 domain. Catalysis depends on charge relay system residues His475 and Asp529. Ser632 serves as the catalytic Charge relay system.

Belongs to the peptidase S1 family. Core component of the complement C1 complex, a calcium-dependent complex composed of 1 molecule of the C1Q subcomplex, 2 molecules of C1R and 2 molecules of C1S. The C1Q subcomplex is composed 18 subunits: 3 chains of C1QA, C1QB, and C1QC trimerize to form 6 collagen-like triple helices connected to six globular ligand-recognition modules. Cleaved and activated by C1R to generate Complement C1s subcomponent heavy and light chains. In terms of processing, the iron and 2-oxoglutarate dependent 3-hydroxylation of aspartate and asparagine is (R) stereospecific within EGF domains.

The protein localises to the secreted. It localises to the cell surface. The enzyme catalyses Cleavage of Arg-|-Ala bond in complement component C4 to form C4a and C4b, and Lys(or Arg)-|-Lys bond in complement component C2 to form C2a and C2b: the 'classical' pathway C3 convertase.. With respect to regulation, cleaved and activated by C1R. Immunoglobulin-binding promotes autoactivation of C1R, which results in the cleavage of the Arg-Ile bond in the catalytic domain. Inhibited by C1 inhibitor (SERPING1). Component of the complement C1 complex, a multiprotein complex that initiates the classical pathway of the complement system, a cascade of proteins that leads to phagocytosis and breakdown of pathogens and signaling that strengthens the adaptive immune system. C1S is activated following association of the C1 complex with immunoglobulins (IgG or IgM) complexed with antigens to form antigen-antibody complexes on the surface of pathogens. C1S is cleaved and activated by C1R to generate C1s subcomponent heavy and light chains. C1s subcomponent light chain then cleaves and activates C2 and C4, the next components of the classical complement pathway. In terms of biological role, serine protease component of the complement C1 complex, which catalyzes cleavage and activation of C2 and C4, the next components of the classical complement pathway. Also able to cleave C1 inhibitor (SERPING1) in vitro; additional evidence is however required to confirm this result in vivo. Also cleaves IGFBP5 and thereby inhibits the trophic effects of IGF1. This is Complement C1s subcomponent from Homo sapiens (Human).